Here is a 253-residue protein sequence, read N- to C-terminus: Triosephosphate isomerase (253 aa).

Residue 15–17 (NWK) participates in substrate binding. The Electrophile role is filled by His-101. Glu-171 (proton acceptor) is an active-site residue. Residues Gly-177, Ser-216, and 237–238 (GG) contribute to the substrate site.

Belongs to the triosephosphate isomerase family. In terms of assembly, homodimer.

The protein localises to the cytoplasm. It catalyses the reaction D-glyceraldehyde 3-phosphate = dihydroxyacetone phosphate. Its pathway is carbohydrate biosynthesis; gluconeogenesis. It participates in carbohydrate degradation; glycolysis; D-glyceraldehyde 3-phosphate from glycerone phosphate: step 1/1. In terms of biological role, involved in the gluconeogenesis. Catalyzes stereospecifically the conversion of dihydroxyacetone phosphate (DHAP) to D-glyceraldehyde-3-phosphate (G3P). This Caulobacter vibrioides (strain ATCC 19089 / CIP 103742 / CB 15) (Caulobacter crescentus) protein is Triosephosphate isomerase.